The chain runs to 79 residues: Putative defensin-like protein 146 (79 aa).

The first 25 residues, 1 to 25 (MMKNQFQLSLIILTFFILLELGVMG), serve as a signal peptide directing secretion. 4 cysteine pairs are disulfide-bonded: Cys-35–Cys-78, Cys-46–Cys-66, Cys-51–Cys-72, and Cys-55–Cys-74.

The protein belongs to the DEFL family.

It is found in the secreted. This Arabidopsis thaliana (Mouse-ear cress) protein is Putative defensin-like protein 146 (LCR9).